The sequence spans 413 residues: Glutamyl-tRNA reductase (413 aa).

Substrate-binding positions include 49 to 52 (TCNR), Ser105, 110 to 112 (EPQ), and Gln116. The Nucleophile role is filled by Cys50. NADP(+) is bound at residue 185-190 (GAGETI).

The protein belongs to the glutamyl-tRNA reductase family. Homodimer.

It catalyses the reaction (S)-4-amino-5-oxopentanoate + tRNA(Glu) + NADP(+) = L-glutamyl-tRNA(Glu) + NADPH + H(+). It functions in the pathway porphyrin-containing compound metabolism; protoporphyrin-IX biosynthesis; 5-aminolevulinate from L-glutamyl-tRNA(Glu): step 1/2. Functionally, catalyzes the NADPH-dependent reduction of glutamyl-tRNA(Glu) to glutamate 1-semialdehyde (GSA). The polypeptide is Glutamyl-tRNA reductase (Coxiella burnetii (strain Dugway 5J108-111)).